The chain runs to 184 residues: Isopentenyl-diphosphate Delta-isomerase (184 aa).

Positions 25 and 32 each coordinate Mn(2+). The Nudix hydrolase domain occupies 30-164 (PLHLAFSCWL…PWAFSPWMVL (135 aa)). Residue Cys67 is part of the active site. His69 lines the Mn(2+) pocket. Glu87 provides a ligand contact to Mg(2+). Glu114 and Glu116 together coordinate Mn(2+). Glu116 is an active-site residue.

It belongs to the IPP isomerase type 1 family. In terms of assembly, homodimer. Mg(2+) serves as cofactor. Mn(2+) is required as a cofactor.

The protein localises to the cytoplasm. It catalyses the reaction isopentenyl diphosphate = dimethylallyl diphosphate. Its pathway is isoprenoid biosynthesis; dimethylallyl diphosphate biosynthesis; dimethylallyl diphosphate from isopentenyl diphosphate: step 1/1. Functionally, catalyzes the 1,3-allylic rearrangement of the homoallylic substrate isopentenyl (IPP) to its highly electrophilic allylic isomer, dimethylallyl diphosphate (DMAPP). This is Isopentenyl-diphosphate Delta-isomerase from Klebsiella pneumoniae subsp. pneumoniae (strain ATCC 700721 / MGH 78578).